The chain runs to 1043 residues: Phosphatidylinositol 4,5-bisphosphate 3-kinase catalytic subunit delta isoform (1043 aa).

The region spanning 16–105 (ESQSVVVDFL…LPVLRLVARE (90 aa)) is the PI3K-ABD domain. The 92-residue stretch at 187–278 (NRALLVNVKF…GLTPHLTMVH (92 aa)) folds into the PI3K-RBD domain. A disordered region spans residues 287-312 (DEQSNPAPQVQKPRAKPPPIPAKKPS). A C2 PI3K-type domain is found at 319–476 (LEQPFSIELI…SAAALVIYLP (158 aa)). A PIK helical domain is found at 496–673 (RHGERGRITE…GLIMEAYCRG (178 aa)). At Tyr523 the chain carries Phosphotyrosine. The PI3K/PI4K catalytic domain occupies 744 to 1026 (CVEQCTFMDS…KFNEALRESW (283 aa)). The tract at residues 750–756 (FMDSKMK) is G-loop. The catalytic loop stretch occupies residues 889–897 (GIGDRHSDN). Residues 908-934 (HIDFGHFLGNFKTKFGINRERVPFILT) form an activation loop region. Ser1038 is modified (phosphoserine; by autocatalysis).

It belongs to the PI3/PI4-kinase family. As to quaternary structure, heterodimer of a catalytic subunit PIK3CD and a p85 regulatory subunit (PIK3R1, PIK3R2 or PIK3R3). Interacts with ERAS and HRAS. Post-translationally, autophosphorylation on Ser-1038 results in the almost complete inactivation of the lipid kinase activity. Abundantly expressed in adult mouse spleen as well as in testis. Isoform 1 is expressed in spleen and lung (at protein level). Isoform 1 is expressed predominantly in leukocytes.

It is found in the cytoplasm. The catalysed reaction is a 1,2-diacyl-sn-glycero-3-phospho-(1D-myo-inositol-4,5-bisphosphate) + ATP = a 1,2-diacyl-sn-glycero-3-phospho-(1D-myo-inositol-3,4,5-trisphosphate) + ADP + H(+). It carries out the reaction a 1,2-diacyl-sn-glycero-3-phospho-(1D-myo-inositol) + ATP = a 1,2-diacyl-sn-glycero-3-phospho-(1D-myo-inositol-3-phosphate) + ADP + H(+). The enzyme catalyses 1-octadecanoyl-2-(5Z,8Z,11Z,14Z)-eicosatetraenoyl-sn-glycero-3-phospho-1D-myo-inositol 4,5-bisphosphate + ATP = 1-octadecanoyl-2-(5Z,8Z,11Z,14Z-eicosatetraenoyl)-sn-glycero-3-phospho-(1D-myo-inositol 3,4,5-triphosphate) + ADP + H(+). It participates in phospholipid metabolism; phosphatidylinositol phosphate biosynthesis. With respect to regulation, activated by growth factors and cytokine receptors through a tyrosine-kinase-dependent mechanism. Activated by RAS. IC87114 inhibits lipid kinase activity and is selective in cells at doses up to 5-10 uM. Among other effects, IC87114 reduces allergic responses, prevents the recruitment of antigen-specific T cells into target tissue, and affects natural killer cell chemotaxis. Functionally, phosphoinositide-3-kinase (PI3K) phosphorylates phosphatidylinositol (PI) and its phosphorylated derivatives at position 3 of the inositol ring to produce 3-phosphoinositides. Uses ATP and PtdIns(4,5)P2 (phosphatidylinositol 4,5-bisphosphate) to generate phosphatidylinositol 3,4,5-trisphosphate (PIP3). PIP3 plays a key role by recruiting PH domain-containing proteins to the membrane, including AKT1 and PDPK1, activating signaling cascades involved in cell growth, survival, proliferation, motility and morphology. Mediates immune responses. Plays a role in B-cell development, proliferation, migration, and function. Required for B-cell receptor (BCR) signaling. Mediates B-cell proliferation response to anti-IgM, anti-CD40 and IL4 stimulation. Promotes cytokine production in response to TLR4 and TLR9. Required for antibody class switch mediated by TLR9. Involved in the antigen presentation function of B-cells. Involved in B-cell chemotaxis in response to CXCL13 and sphingosine 1-phosphate (S1P). Required for proliferation, signaling and cytokine production of naive, effector and memory T-cells. Required for T-cell receptor (TCR) signaling. Mediates TCR signaling events at the immune synapse. Activation by TCR leads to antigen-dependent memory T-cell migration and retention to antigenic tissues. Together with PIK3CG participates in T-cell development. Contributes to T-helper cell expansion and differentiation. Required for T-cell migration mediated by homing receptors SELL/CD62L, CCR7 and S1PR1 and antigen dependent recruitment of T-cells. Together with PIK3CG is involved in natural killer (NK) cell development and migration towards the sites of inflammation. Participates in NK cell receptor activation. Plays a role in NK cell maturation and cytokine production. Together with PIK3CG is involved in neutrophil chemotaxis and extravasation. Together with PIK3CG participates in neutrophil respiratory burst. Plays important roles in mast-cell development and mast cell mediated allergic response. Involved in stem cell factor (SCF)-mediated proliferation, adhesion and migration. Required for allergen-IgE-induced degranulation and cytokine release. The lipid kinase activity is required for its biological function. The sequence is that of Phosphatidylinositol 4,5-bisphosphate 3-kinase catalytic subunit delta isoform (Pik3cd) from Mus musculus (Mouse).